Reading from the N-terminus, the 373-residue chain is Putative gustatory receptor 10b (373 aa).

Topologically, residues M1–R8 are cytoplasmic. The helical transmembrane segment at L9–N29 threads the bilayer. The Extracellular segment spans residues P30–S82. A helical transmembrane segment spans residues T83–F103. Residues E104–C132 lie on the Cytoplasmic side of the membrane. A helical membrane pass occupies residues L133–I153. The Extracellular portion of the chain corresponds to M154 to L170. A helical membrane pass occupies residues Y171–L191. At N192–R230 the chain is on the cytoplasmic side. A helical membrane pass occupies residues M231–I251. Topologically, residues Y252–K273 are extracellular. A helical membrane pass occupies residues M274–I294. Over C295 to C350 the chain is Cytoplasmic. A helical transmembrane segment spans residues A351–I371. The Extracellular portion of the chain corresponds to P372–G373.

The protein belongs to the insect chemoreceptor superfamily. Gustatory receptor (GR) family. Gr10a subfamily.

It localises to the cell membrane. Probable gustatory receptor which mediates acceptance or avoidance behavior, depending on its substrates. In Drosophila melanogaster (Fruit fly), this protein is Putative gustatory receptor 10b (Gr10b).